We begin with the raw amino-acid sequence, 509 residues long: Probable malate:quinone oxidoreductase (509 aa).

Residues 490 to 509 are disordered; the sequence is LGLNEKEPVSGASEKELVYS. The span at 493 to 509 shows a compositional bias: basic and acidic residues; the sequence is NEKEPVSGASEKELVYS.

Belongs to the MQO family. Requires FAD as cofactor.

The catalysed reaction is (S)-malate + a quinone = a quinol + oxaloacetate. It functions in the pathway carbohydrate metabolism; tricarboxylic acid cycle; oxaloacetate from (S)-malate (quinone route): step 1/1. This chain is Probable malate:quinone oxidoreductase, found in Geobacillus sp. (strain WCH70).